Consider the following 315-residue polypeptide: Methionyl-tRNA formyltransferase (315 aa).

Residues 2-189 are N-terminal domain; it reads SESLRIIFAG…LITTLKQLAD (188 aa). 113–116 contacts (6S)-5,6,7,8-tetrahydrofolate; that stretch reads SLLP. The segment at 210 to 315 is C-terminal domain; it reads KEEARIDWSL…EWFVPGNRLA (106 aa).

Belongs to the Fmt family.

It catalyses the reaction L-methionyl-tRNA(fMet) + (6R)-10-formyltetrahydrofolate = N-formyl-L-methionyl-tRNA(fMet) + (6S)-5,6,7,8-tetrahydrofolate + H(+). Attaches a formyl group to the free amino group of methionyl-tRNA(fMet). The formyl group appears to play a dual role in the initiator identity of N-formylmethionyl-tRNA by promoting its recognition by IF2 and preventing the misappropriation of this tRNA by the elongation apparatus. The sequence is that of Methionyl-tRNA formyltransferase from Escherichia coli O6:H1 (strain CFT073 / ATCC 700928 / UPEC).